We begin with the raw amino-acid sequence, 642 residues long: Frizzled-1 (642 aa).

An N-terminal signal peptide occupies residues 1 to 68; that stretch reads MAEEAAPSES…WLLEAPLLLG (68 aa). Disordered regions lie at residues 26–45 and 76–99; these read PGRREEVGHEDTASHRRPRA and QVSGPGQQAPPPPQPQQSGQQYNG. Topologically, residues 69-317 are extracellular; it reads VRAQAAGQVS…PEELRFSRTW (249 aa). The FZ domain occupies 106 to 225; sequence PDHGYCQPIS…HGAGELCVGQ (120 aa). Cystine bridges form between Cys-111-Cys-172, Cys-119-Cys-165, Cys-156-Cys-193, Cys-182-Cys-222, and Cys-186-Cys-210. The N-linked (GlcNAc...) asparagine glycan is linked to Asn-125. The N-linked (GlcNAc...) asparagine glycan is linked to Asn-226. Residues 318 to 338 form a helical membrane-spanning segment; sequence IGIWSVLCCASTLFTVLTYLV. At 339 to 349 the chain is on the cytoplasmic side; it reads DMRRFSYPERP. A helical transmembrane segment spans residues 350–370; that stretch reads IIFLSGCYTAVAVAYIAGFLL. Residues 371–397 lie on the Extracellular side of the membrane; sequence EDRVVCNDKFAEDGARTVAQGTKKEGC. Residues 398 to 418 form a helical membrane-spanning segment; sequence TILFMMLYFFSMASSIWWVIL. The Cytoplasmic portion of the chain corresponds to 419-440; it reads SLTWFLAAGMKWGHEAIEANSQ. A helical membrane pass occupies residues 441–461; it reads YFHLAAWAVPAIKTITILALG. The Extracellular segment spans residues 462–484; sequence QVDGDVLSGVCFVGLNNVDALRG. Residues 485 to 505 form a helical membrane-spanning segment; the sequence is FVLAPLFVYLFIGTSFLLAGF. Residues 506-531 lie on the Cytoplasmic side of the membrane; the sequence is VSLFRIRTIMKHDGTKTEKLEKLMVR. A helical transmembrane segment spans residues 532–552; the sequence is IGVFSVLYTVPATIVIACYFY. At 553 to 593 the chain is on the extracellular side; the sequence is EQAFRDQWERSWVAQSCKSYAIPCPHLQGGGGVPPHPPMSP. Residues 594–614 form a helical membrane-spanning segment; it reads DFTVFMIKYLMTLIVGITSGF. Residues 615 to 642 are Cytoplasmic-facing; that stretch reads WIWSGKTLNSWRKFYTRLTNSKQGETTV. Residues 620 to 625 carry the Lys-Thr-X-X-X-Trp motif, mediates interaction with the PDZ domain of Dvl family members motif; it reads KTLNSW. Positions 640-642 match the PDZ-binding motif; the sequence is TTV.

The protein belongs to the G-protein coupled receptor Fz/Smo family. Interacts with MYOC. Interacts with WNT7B. In terms of processing, ubiquitinated by ZNRF3, leading to its degradation by the proteasome. Expressed in chondrocytes.

It is found in the cell membrane. In terms of biological role, receptor for Wnt proteins. Activated by WNT7B. Activated by WNT3A, WNT3, WNT1 and to a lesser extent WNT2, but apparently not by WNT4, WNT5A, WNT5B, WNT6, WNT7A or WNT7B. Contradictory results showing activation by WNT7B have been described for mouse. Functions in the canonical Wnt/beta-catenin signaling pathway. The canonical Wnt/beta-catenin signaling pathway leads to the activation of disheveled proteins, inhibition of GSK-3 kinase, nuclear accumulation of beta-catenin and activation of Wnt target genes. A second signaling pathway involving PKC and calcium fluxes has been seen for some family members, but it is not yet clear if it represents a distinct pathway or if it can be integrated in the canonical pathway, as PKC seems to be required for Wnt-mediated inactivation of GSK-3 kinase. Both pathways seem to involve interactions with G-proteins. May be involved in transduction and intercellular transmission of polarity information during tissue morphogenesis and/or in differentiated tissues. This chain is Frizzled-1 (Fzd1), found in Mus musculus (Mouse).